The following is a 200-amino-acid chain: Exopolysaccharide production protein PSS (200 aa).

Belongs to the bacterial sugar transferase family.

The polypeptide is Exopolysaccharide production protein PSS (pss) (Rhizobium leguminosarum bv. phaseoli).